The following is an 81-amino-acid chain: MIIHTVTVVDGNGNVLVKREFSSSVERQTYADILVDVISYIEGRKVKHVEKEILKENPDLRTKLSSAREIEDKFVVAEMVI.

This is an uncharacterized protein from Sulfolobus islandicus filamentous virus (isolate Iceland/Hveragerdi) (SIFV).